The primary structure comprises 201 residues: Protein Thf1 (201 aa).

A coiled-coil region spans residues 174-201 (IYKSSISKMEQAKELIQEQRIKDKKKTL).

The protein belongs to the THF1 family.

May be involved in photosynthetic membrane biogenesis. The sequence is that of Protein Thf1 from Prochlorococcus marinus (strain MIT 9312).